Consider the following 773-residue polypeptide: Ethylene receptor 2 (773 aa).

The next 4 helical transmembrane spans lie at 4-24, 53-73, 82-102, and 122-142; these read EIAS…VLAI, VSDF…LYFV, WVLF…LLHG, and LTAL…PLLL. Cu cation contacts are provided by Cys94 and His98. Residues 187–331 form the GAF domain; it reads DRHTILYTTL…VVADQVTVAL (145 aa). A Histidine kinase domain is found at 374–614; it reads TMSEGMRRPM…PETMSLLLRF (241 aa). The region spanning 647–766 is the Response regulatory domain; sequence QVLLVDTNDS…AMESELRRVL (120 aa). A 4-aspartylphosphate modification is found at Asp702. Residue Lys751 forms a Glycyl lysine isopeptide (Lys-Gly) (interchain with G-Cter in ubiquitin) linkage.

This sequence belongs to the ethylene receptor family. In terms of assembly, heteromer with ETR1. Binds to MRF3/ECIP1. Requires Cu cation as cofactor. Post-translationally, autophosphorylated predominantly on Ser residues. As to expression, expressed in seedlings, roots, leaves, flowers, mature siliques, shoot apical meristems, leaf primordia, inflorescence meristems, young floral meristems, developing petals, carpels and ovules. Low expression in stamens.

Its subcellular location is the endoplasmic reticulum membrane. Functionally, ethylene receptor related to bacterial two-component regulators. Acts as a redundant negative regulator of ethylene signaling. In Arabidopsis thaliana (Mouse-ear cress), this protein is Ethylene receptor 2.